Here is a 443-residue protein sequence, read N- to C-terminus: Ribulose bisphosphate carboxylase large chain (443 aa).

Substrate is bound by residues Asn-89 and Thr-139. Catalysis depends on Lys-141, which acts as the Proton acceptor. Lys-143 provides a ligand contact to substrate. Positions 167, 169, and 170 each coordinate Mg(2+). An N6-carboxylysine modification is found at Lys-167. His-260 acts as the Proton acceptor in catalysis. The substrate site is built by Arg-261, His-293, and Ser-345.

The protein belongs to the RuBisCO large chain family. Type I subfamily. As to quaternary structure, heterohexadecamer of 8 large chains and 8 small chains; disulfide-linked. The disulfide link is formed within the large subunit homodimers. Mg(2+) serves as cofactor. Post-translationally, the disulfide bond which can form in the large chain dimeric partners within the hexadecamer appears to be associated with oxidative stress and protein turnover.

Its subcellular location is the plastid. The protein localises to the chloroplast. It catalyses the reaction 2 (2R)-3-phosphoglycerate + 2 H(+) = D-ribulose 1,5-bisphosphate + CO2 + H2O. The enzyme catalyses D-ribulose 1,5-bisphosphate + O2 = 2-phosphoglycolate + (2R)-3-phosphoglycerate + 2 H(+). RuBisCO catalyzes two reactions: the carboxylation of D-ribulose 1,5-bisphosphate, the primary event in carbon dioxide fixation, as well as the oxidative fragmentation of the pentose substrate in the photorespiration process. Both reactions occur simultaneously and in competition at the same active site. The chain is Ribulose bisphosphate carboxylase large chain from Buddleja davidii (Butterfly bush).